A 115-amino-acid polypeptide reads, in one-letter code: Ribonuclease P protein component (115 aa).

Belongs to the RnpA family. Consists of a catalytic RNA component (M1 or rnpB) and a protein subunit.

It catalyses the reaction Endonucleolytic cleavage of RNA, removing 5'-extranucleotides from tRNA precursor.. RNaseP catalyzes the removal of the 5'-leader sequence from pre-tRNA to produce the mature 5'-terminus. It can also cleave other RNA substrates such as 4.5S RNA. The protein component plays an auxiliary but essential role in vivo by binding to the 5'-leader sequence and broadening the substrate specificity of the ribozyme. This is Ribonuclease P protein component from Staphylococcus carnosus (strain TM300).